Here is a 377-residue protein sequence, read N- to C-terminus: 5-hydroxytryptamine receptor 1D (377 aa).

3 N-linked (GlcNAc...) asparagine glycosylation sites follow: Asn5, Asn17, and Asn21. 3 helical membrane passes run 39 to 64 (ISLALLLSIITMATALSNAFVLTTIF), 76 to 97 (LIGSLAMTDLLVSILVMPISIA), and 110 to 134 (LCDIWLSSDITCCTASILHLCVIAL). The cysteines at positions 111 and 188 are disulfide-linked. Serotonin is bound by residues Asp118 and Cys122. Residues 135 to 137 (DRY) carry the DRY motif; important for ligand-induced conformation changes motif. 4 consecutive transmembrane segments (helical) span residues 155 to 176 (AAVMIATVWVISICISIPPLFW), 195 to 218 (ISYTIYSTCGAFYIPSVLLIILYG), 301 to 326 (KTLGIILGAFIVCWLPFFVASLVLPI), and 336 to 359 (ALFDFFTWLGYLNSLINPIIYTVF). Position 321 (Ser321) interacts with serotonin. Positions 352–356 (NPIIY) match the NPxxY motif; important for ligand-induced conformation changes and signaling motif.

Belongs to the G-protein coupled receptor 1 family. In terms of assembly, homodimer. Heterodimer with HTR1B.

The protein resides in the cell membrane. Functionally, G-protein coupled receptor for 5-hydroxytryptamine (serotonin). Also functions as a receptor for ergot alkaloid derivatives, various anxiolytic and antidepressant drugs and other psychoactive substances. Ligand binding causes a conformation change that triggers signaling via guanine nucleotide-binding proteins (G proteins) and modulates the activity of downstream effectors, such as adenylate cyclase. HTR1D is coupled to G(i)/G(o) G alpha proteins and mediates inhibitory neurotransmission by inhibiting adenylate cyclase activity. Regulates the release of 5-hydroxytryptamine in the brain, and thereby affects neural activity. May also play a role in regulating the release of other neurotransmitters. May play a role in vasoconstriction. In Canis lupus familiaris (Dog), this protein is 5-hydroxytryptamine receptor 1D (HTR1D).